Here is a 707-residue protein sequence, read N- to C-terminus: MSSALRSRARSASLGTTTQGWDPPPLRRPSRARRRQWMREAAQAAAQAAVQAAQAAAAQVAQAHVDENEVVDLMADEAGGGVTTLTTLSSVSTTTVLGHATFSACVRSDVMRDGEKEDAASDKENLRRPVVPSTSSRGSAASGDGYHGLRCRETSAMWSFEYDRDGDVTSVRRALFTGGSDPSDSVSGVRGGRKRPLRPPLVSLARTPLCRRRVGGVDAVLEENDVELRAESQDSAVASGPGRIPQPLSGSSGEESATAVEADSTSHDDVHCTCSNDQIITTSIRGLTCDPRMFLRLTHPELCELSISYLLVYVPKEDDFCHKICYAVDMSDESYRLGQGSFGEVWPLDRYRVVKVARKHSETVLTVWMSGLIRTRAAGEQQQPPSLVGTGVHRGLLTATGCCLLHNVTVHRRFHTDMFHHDQWKLACIDSYRRAFCTLADAIKFLNHQCRVCHFDITPMNVLIDVNPHNPSEIVRAALCDYSLSEPYPDYNERCVAVFQETGTARRIPNCSHRLRECYHPAFRPMPLQKLLICDPHARFPVAGLRRYCMSELSALGNVLGFCLMRLLDRRGLDEVRMGTEALLFKHAGAACRALENGKLTHCSDACLLILAAQMSYGACLLGEHGAALVSHTLRFVEAKMSSCRVRAFRRFYHECSQTMLHEYVRKNVERLLATSDGLYLYNAFRRTTSIICEEDLDGDCRQLFPE.

A compositionally biased stretch (low complexity) spans 1-14 (MSSALRSRARSASL). Disordered stretches follow at residues 1–33 (MSSA…SRAR), 113–146 (DGEK…GDGY), 176–198 (FTGG…RPLR), and 231–264 (ESQD…EADS). Basic and acidic residues predominate over residues 113–127 (DGEKEDAASDKENLR). The span at 178–188 (GGSDPSDSVSG) shows a compositional bias: low complexity. ATP contacts are provided by residues 337-345 (LGQGSFGEV) and K359. D456 serves as the catalytic Proton acceptor.

The protein belongs to the protein kinase superfamily. Tyr protein kinase family. HCMV ganciclovir subfamily. Interacts with UL83. Autophosphorylates on serine and threonine residues.

It is found in the virion. It catalyses the reaction L-seryl-[protein] + ATP = O-phospho-L-seryl-[protein] + ADP + H(+). It carries out the reaction L-threonyl-[protein] + ATP = O-phospho-L-threonyl-[protein] + ADP + H(+). Its function is as follows. Serine/threonine protein kinase that plays important roles in several processes including nuclear viral egress, viral replication or regulation of host cell cycle progression. Participates in the acquisition of tegument during virion morphogenesis in the nucleus. Phosphorylates the viral nuclear egress complex (NEC) subunits UL50 and UL53. Redistributes the host nuclear lamina by phosphorylating cellular Lamins-A/C. Plays a role in viral DNA synthesis by phosphorylating the DNA polymerase processivity factor UL44. Stimulates host cell cycle to support viral DNA synthesis by phosphorylating host retinoblastoma/RB1 protein. Additional substrates have been identified including host EF1D or H2B. Also phosphorylates host SAMHD1 and thereby counteracts its antiviral effect by reducing its dNTP hydrolase activity. The sequence is that of Serine/threonine protein kinase UL97 (UL97) from Human cytomegalovirus (strain AD169) (HHV-5).